The chain runs to 452 residues: tRNA modification GTPase MnmE (452 aa).

(6S)-5-formyl-5,6,7,8-tetrahydrofolate is bound by residues Arg25, Glu81, and Lys120. Residues 216-375 enclose the TrmE-type G domain; the sequence is GITVVIAGEP…LKNHLKNTAG (160 aa). Position 226 (Asn226) interacts with K(+). GTP-binding positions include 226–231, 245–251, and 270–273; these read NVGKSS, TDIAGTT, and DTAG. Mg(2+) is bound at residue Ser230. K(+) contacts are provided by Thr245, Ile247, and Thr250. Thr251 lines the Mg(2+) pocket. Lys452 is a (6S)-5-formyl-5,6,7,8-tetrahydrofolate binding site.

It belongs to the TRAFAC class TrmE-Era-EngA-EngB-Septin-like GTPase superfamily. TrmE GTPase family. As to quaternary structure, homodimer. Heterotetramer of two MnmE and two MnmG subunits. It depends on K(+) as a cofactor.

Its subcellular location is the cytoplasm. Functionally, exhibits a very high intrinsic GTPase hydrolysis rate. Involved in the addition of a carboxymethylaminomethyl (cmnm) group at the wobble position (U34) of certain tRNAs, forming tRNA-cmnm(5)s(2)U34. This is tRNA modification GTPase MnmE from Coxiella burnetii (strain Dugway 5J108-111).